A 439-amino-acid polypeptide reads, in one-letter code: Lipoyl synthase, mitochondrial (439 aa).

A mitochondrion-targeting transit peptide spans 1–37 (MVASARGLRTLHSAHSSISALPASTVPRLQLAVSRCY). [4Fe-4S] cluster contacts are provided by Cys-150, Cys-155, Cys-161, Cys-181, Cys-185, Cys-188, and Ser-396. The Radical SAM core domain occupies 164–385 (GSSKSAATAT…KERALEMGFL (222 aa)).

This sequence belongs to the radical SAM superfamily. Lipoyl synthase family. [4Fe-4S] cluster serves as cofactor.

It is found in the mitochondrion. It carries out the reaction [[Fe-S] cluster scaffold protein carrying a second [4Fe-4S](2+) cluster] + N(6)-octanoyl-L-lysyl-[protein] + 2 oxidized [2Fe-2S]-[ferredoxin] + 2 S-adenosyl-L-methionine + 4 H(+) = [[Fe-S] cluster scaffold protein] + N(6)-[(R)-dihydrolipoyl]-L-lysyl-[protein] + 4 Fe(3+) + 2 hydrogen sulfide + 2 5'-deoxyadenosine + 2 L-methionine + 2 reduced [2Fe-2S]-[ferredoxin]. Its pathway is protein modification; protein lipoylation via endogenous pathway; protein N(6)-(lipoyl)lysine from octanoyl-[acyl-carrier-protein]: step 2/2. Its function is as follows. Catalyzes the radical-mediated insertion of two sulfur atoms into the C-6 and C-8 positions of the octanoyl moiety bound to the lipoyl domains of lipoate-dependent enzymes, thereby converting the octanoylated domains into lipoylated derivatives. The protein is Lipoyl synthase, mitochondrial of Paracoccidioides lutzii (strain ATCC MYA-826 / Pb01) (Paracoccidioides brasiliensis).